The chain runs to 142 residues: MAKKVQAYVKLQVAAGMANPSPPVGPALGQQGVNIMEFCKAFNAKTDSIEKGLPIPVVITVYSDRSFTFVTKTPPAAVLLKKAAGIKSGSGKPNKDKVGKVTSAQIREIAETKAADMTGASVDAMMRSIEGTARSMGLVVEG.

Belongs to the universal ribosomal protein uL11 family. Part of the ribosomal stalk of the 50S ribosomal subunit. Interacts with L10 and the large rRNA to form the base of the stalk. L10 forms an elongated spine to which L12 dimers bind in a sequential fashion forming a multimeric L10(L12)X complex. Post-translationally, one or more lysine residues are methylated.

Forms part of the ribosomal stalk which helps the ribosome interact with GTP-bound translation factors. In Photorhabdus laumondii subsp. laumondii (strain DSM 15139 / CIP 105565 / TT01) (Photorhabdus luminescens subsp. laumondii), this protein is Large ribosomal subunit protein uL11.